A 208-amino-acid polypeptide reads, in one-letter code: MKVKVQTLDAKASGDIELNDEVFAVEPRADILARVVQWQLHNRRAPARAARERSDVARTGKKFGRQKGGGTARHGDRRAPVFIGGGKAHGPRARVFESSLNKKVRALGLKMALSSKAKDGKLVVVDTLELKDAKTKALIAKIGKLGFGATALVIDGEAVDNGFQLASSNIHTINVLPAIGANVYDILKHETLVLTRAAVEKLEARFNG.

A disordered region spans residues 47–84 (ARAARERSDVARTGKKFGRQKGGGTARHGDRRAPVFIG). Residues 49–58 (AARERSDVAR) show a composition bias toward basic and acidic residues.

The protein belongs to the universal ribosomal protein uL4 family. As to quaternary structure, part of the 50S ribosomal subunit.

One of the primary rRNA binding proteins, this protein initially binds near the 5'-end of the 23S rRNA. It is important during the early stages of 50S assembly. It makes multiple contacts with different domains of the 23S rRNA in the assembled 50S subunit and ribosome. In terms of biological role, forms part of the polypeptide exit tunnel. This is Large ribosomal subunit protein uL4 from Rhizorhabdus wittichii (strain DSM 6014 / CCUG 31198 / JCM 15750 / NBRC 105917 / EY 4224 / RW1) (Sphingomonas wittichii).